Reading from the N-terminus, the 203-residue chain is Probable proteasome subunit beta type-1 (203 aa).

Positions 1 to 10 (MMSNEKEMTG) are cleaved as a propeptide — removed in mature form. The Nucleophile role is filled by threonine 11.

Belongs to the peptidase T1B family. In terms of assembly, the 26S proteasome consists of a 20S proteasome core and two 19S regulatory subunits. The 20S proteasome core is composed of 28 subunits that are arranged in four stacked rings, resulting in a barrel-shaped structure. The two end rings are each formed by seven alpha subunits, and the two central rings are each formed by seven beta subunits. The catalytic chamber with the active sites is on the inside of the barrel.

It is found in the cytoplasm. It localises to the nucleus. It catalyses the reaction Cleavage of peptide bonds with very broad specificity.. Its function is as follows. The proteasome degrades poly-ubiquitinated proteins in the cytoplasm and in the nucleus. It is essential for the regulated turnover of proteins and for the removal of misfolded proteins. The proteasome is a multicatalytic proteinase complex that is characterized by its ability to cleave peptides with Arg, Phe, Tyr, Leu, and Glu adjacent to the leaving group at neutral or slightly basic pH. It has an ATP-dependent proteolytic activity. This Encephalitozoon cuniculi (strain GB-M1) (Microsporidian parasite) protein is Probable proteasome subunit beta type-1 (PRE3).